A 128-amino-acid polypeptide reads, in one-letter code: MAKRKVARKRDKKNIPSGVAHIQATFNNTIVTITDPSGAVVSWSSAGVVGFKGSRKSTPFAAQLAAEDAAKKAMEHGMRNVEVYVKGPGSGRESALRALQGAGLNVVMLRDVTPVPHNGCRPRKRRRV.

It belongs to the universal ribosomal protein uS11 family. In terms of assembly, part of the 30S ribosomal subunit. Interacts with proteins S7 and S18. Binds to IF-3.

Functionally, located on the platform of the 30S subunit, it bridges several disparate RNA helices of the 16S rRNA. Forms part of the Shine-Dalgarno cleft in the 70S ribosome. This Desulfatibacillum aliphaticivorans protein is Small ribosomal subunit protein uS11.